Consider the following 204-residue polypeptide: 3,4-dihydroxy-2-butanone 4-phosphate synthase (204 aa).

Mg(2+) is bound at residue Glu27. Asp31 is a D-ribulose 5-phosphate binding site. Cys56 bears the S-glutathionyl cysteine mark. D-ribulose 5-phosphate is bound by residues Thr82 and 140–144 (RDGHT). His143 is a binding site for Mg(2+).

This sequence belongs to the DHBP synthase family. In terms of assembly, homodimer. The cofactor is Mg(2+). Mn(2+) is required as a cofactor. Post-translationally, S-glutathionylation is reversible and dependent on a glutaredoxin.

It catalyses the reaction D-ribulose 5-phosphate = (2S)-2-hydroxy-3-oxobutyl phosphate + formate + H(+). The protein operates within cofactor biosynthesis; riboflavin biosynthesis; 2-hydroxy-3-oxobutyl phosphate from D-ribulose 5-phosphate: step 1/1. Its function is as follows. Catalyzes the conversion of D-ribulose 5-phosphate to formate and 3,4-dihydroxy-2-butanone 4-phosphate. This Schizosaccharomyces pombe (strain 972 / ATCC 24843) (Fission yeast) protein is 3,4-dihydroxy-2-butanone 4-phosphate synthase.